The primary structure comprises 159 residues: Late embryogenesis abundant protein 50 (159 aa).

SMP domains are found at residues T30–K87 and N96–N151.

It belongs to the LEA type SMP family.

The protein resides in the cytoplasm. It localises to the nucleus. In terms of biological role, LEA proteins are late embryonic proteins abundant in higher plant seed embryos. The function of those proteins is not known. In Arabidopsis thaliana (Mouse-ear cress), this protein is Late embryogenesis abundant protein 50.